A 746-amino-acid polypeptide reads, in one-letter code: Ferrienterobactin receptor (746 aa).

A signal peptide spans 1-22 (MNKKIHSLALLVNLGIYGVAQA). The short motif at 34–41 (DTIVVTAA) is the TonB box element. Positions 42 to 169 (EQNLQAPGVS…AGGVVNIITK (128 aa)) constitute a TBDR plug domain. A disordered region spans residues 76-96 (GVNLTGNSTSGQRGNNRQIDI). The span at 79-93 (LTGNSTSGQRGNNRQ) shows a compositional bias: polar residues. Residues 174-746 (EWHGSWDAYF…TWYMSVNTHF (573 aa)) form the TBDR beta-barrel domain. The TonB C-terminal box signature appears at 729–746 (YTYNEPGRTWYMSVNTHF).

It belongs to the TonB-dependent receptor family.

Its subcellular location is the cell outer membrane. This protein is involved in the initial step of iron uptake by binding ferrienterobactin (Fe-ENT), an iron chelatin siderophore that allows E.coli to extract iron from the environment. FepA also acts as a receptor for colicins B and D. The protein is Ferrienterobactin receptor (fepA) of Escherichia coli (strain K12).